Here is a 279-residue protein sequence, read N- to C-terminus: DegV domain-containing protein M6_Spy1246 (279 aa).

The DegV domain maps to 4 to 278; it reads IKIVTDSSIT…EGAFAVMVRY (275 aa). T62 and S95 together coordinate hexadecanoate.

Its function is as follows. May bind long-chain fatty acids, such as palmitate, and may play a role in lipid transport or fatty acid metabolism. The sequence is that of DegV domain-containing protein M6_Spy1246 from Streptococcus pyogenes serotype M6 (strain ATCC BAA-946 / MGAS10394).